Reading from the N-terminus, the 418-residue chain is S-adenosylmethionine synthase (418 aa).

Position 16 (His-16) interacts with ATP. Asp-18 is a Mg(2+) binding site. Glu-44 serves as a coordination point for K(+). Positions 57 and 100 each coordinate L-methionine. Residues 100–110 are flexible loop; it reads QSPDIAQGVDS. Residues 174–176, Asp-259, 265–266, Ala-282, and Lys-286 each bind ATP; these read DGK and RK. Asp-259 is a binding site for L-methionine. Lys-290 provides a ligand contact to L-methionine.

Belongs to the AdoMet synthase family. Homotetramer; dimer of dimers. Mg(2+) serves as cofactor. K(+) is required as a cofactor.

It is found in the cytoplasm. It carries out the reaction L-methionine + ATP + H2O = S-adenosyl-L-methionine + phosphate + diphosphate. Its pathway is amino-acid biosynthesis; S-adenosyl-L-methionine biosynthesis; S-adenosyl-L-methionine from L-methionine: step 1/1. Its function is as follows. Catalyzes the formation of S-adenosylmethionine (AdoMet) from methionine and ATP. The overall synthetic reaction is composed of two sequential steps, AdoMet formation and the subsequent tripolyphosphate hydrolysis which occurs prior to release of AdoMet from the enzyme. This chain is S-adenosylmethionine synthase, found in Acaryochloris marina (strain MBIC 11017).